An 876-amino-acid polypeptide reads, in one-letter code: MEMKPKYDPREVEAGRYEEWVKNGYFKPSEDKSKETYTIVIPPPNVTGKLHLGHAWDTTLQDIITRMKRMQGYDTLYLPGMDHAGIATQAKVEAKLNEQGITRYDLGREKFLEQAWDWKEEYASFIRAQWAKLGLGLDYSRERFTLDEGLSKAVKKVFVDLYNKGIIYRGERIINWDPKARTALSDIEVIHEDVQGAFYHFKYPYADVEGFIEIATTRPETMLGDTAIVVNPNDERYKDVIGKTVILPIVGRELPILADEYVDIDFGSGAMKVTPAHDPNDFEIGQRHQLENIIVMDENGKMNNKAGKYEGMDRFDCRKQLVEDLKEQDLVIKIEDHVHSVGHSERSGAVVEPYLSTQWFVRMEDLAKRSLDNQKTDDRIDFYPQRFEHTFNQWMENIRDWTISRQLWWGHQIPAWYHKETGEIYVGEEAPTDIENWQQDEDVLDTWFSSALWPFSTLGWPDLESEDFKRYYPTNALVTGYDIIFFWVARMIFQGLEFTDRRPFNDVLLHGLVRAEDGRKMSKSLGNGVDPMDVIDEYGADSLRYFLATGSSPGHDLRYSTEKVESVWNFINKIWNGARFSLMNIGEDFKVEDIDLSGNLSLADKWILTRLNETIATVTDLSDKYEFGEVGRALYNFIWDDFCDWYIEMSKIPMNGNDEEQKQVTRSVLSYTLDNIMRMLHPFMPFVTEKIWQSLPHEGETIVKASWPEVRESLIFEESKQTMQQLVEIIKSVRQSRVEVNTPLSKEIPILIQAKDKEIETTLSQNKDYLIKFCNPSTLNISTDVEIPEKAMTSVVIAGKVVLPLEGLIDMDKEISRLEKELAKLQSELDRVDKKLSNENFVSKAPEKVINEEKRKKQDYQEKYDGVKARIEQLKA.

The 'HIGH' region motif lies at 44 to 54 (PNVTGKLHLGH). A 'KMSKS' region motif is present at residues 520–524 (KMSKS). Lysine 523 is a binding site for ATP. Residues 805 to 876 (LEGLIDMDKE…VKARIEQLKA (72 aa)) adopt a coiled-coil conformation.

The protein belongs to the class-I aminoacyl-tRNA synthetase family. ValS type 1 subfamily. Monomer.

Its subcellular location is the cytoplasm. It catalyses the reaction tRNA(Val) + L-valine + ATP = L-valyl-tRNA(Val) + AMP + diphosphate. Catalyzes the attachment of valine to tRNA(Val). As ValRS can inadvertently accommodate and process structurally similar amino acids such as threonine, to avoid such errors, it has a 'posttransfer' editing activity that hydrolyzes mischarged Thr-tRNA(Val) in a tRNA-dependent manner. The polypeptide is Valine--tRNA ligase (Staphylococcus aureus (strain MRSA252)).